Here is a 481-residue protein sequence, read N- to C-terminus: Probable squalene synthase (481 aa).

2 helical membrane-spanning segments follow: residues serine 294–phenylalanine 314 and phenylalanine 416–alanine 436.

It belongs to the phytoene/squalene synthase family. It depends on Mg(2+) as a cofactor.

It is found in the endoplasmic reticulum membrane. It catalyses the reaction 2 (2E,6E)-farnesyl diphosphate + NADPH + H(+) = squalene + 2 diphosphate + NADP(+). It carries out the reaction 2 (2E,6E)-farnesyl diphosphate + NADH + H(+) = squalene + 2 diphosphate + NAD(+). Its pathway is terpene metabolism; lanosterol biosynthesis; lanosterol from farnesyl diphosphate: step 1/3. Catalyzes the condensation of 2 two farnesyl pyrophosphate moieties to form squalene. It is the first committed enzyme of the sterol biosynthesis pathway. Required for the biosynthesis of ergosterol. The sequence is that of Probable squalene synthase (erg-6) from Neurospora crassa (strain ATCC 24698 / 74-OR23-1A / CBS 708.71 / DSM 1257 / FGSC 987).